Consider the following 441-residue polypeptide: Glutamate-1-semialdehyde 2,1-aminomutase (441 aa).

Position 275 is an N6-(pyridoxal phosphate)lysine (lysine 275).

This sequence belongs to the class-III pyridoxal-phosphate-dependent aminotransferase family. HemL subfamily. As to quaternary structure, homodimer. It depends on pyridoxal 5'-phosphate as a cofactor.

The protein resides in the cytoplasm. The enzyme catalyses (S)-4-amino-5-oxopentanoate = 5-aminolevulinate. The protein operates within porphyrin-containing compound metabolism; protoporphyrin-IX biosynthesis; 5-aminolevulinate from L-glutamyl-tRNA(Glu): step 2/2. The chain is Glutamate-1-semialdehyde 2,1-aminomutase from Deinococcus deserti (strain DSM 17065 / CIP 109153 / LMG 22923 / VCD115).